Reading from the N-terminus, the 53-residue chain is Photoreceptor disk component PRCD (53 aa).

C2 carries S-palmitoyl cysteine lipidation. Positions 24 to 53 (PEPSRVDGTVVGSGSDTDLQSTGREKGPVK) are disordered. The segment covering 35 to 45 (GSGSDTDLQST) has biased composition (polar residues).

Belongs to the PRCD family. Interacts with RHO/rhodopsin; the interaction promotes PRCD stability. Palmitoylated at Cys-2. Palmitoylation is essential for protein stability and trafficking to the photoreceptor outer segment, but does not appear to be essential for membrane localization. Probably palmitoylated by ZDHHC3. Post-translationally, phosphorylated. In terms of tissue distribution, expressed in retina, where it localizes to both rod and cone photoreceptors (at protein level).

The protein resides in the cell projection. It is found in the cilium. The protein localises to the photoreceptor outer segment. It localises to the membrane. Its subcellular location is the endoplasmic reticulum. The protein resides in the golgi apparatus. Its function is as follows. Involved in vision. This chain is Photoreceptor disk component PRCD, found in Mus musculus (Mouse).